Reading from the N-terminus, the 328-residue chain is 4-hydroxythreonine-4-phosphate dehydrogenase (328 aa).

Substrate is bound by residues H134 and T135. A divalent metal cation-binding residues include H164, H209, and H264. Residues K272, N281, and R290 each coordinate substrate.

It belongs to the PdxA family. Homodimer. Zn(2+) is required as a cofactor. Requires Mg(2+) as cofactor. The cofactor is Co(2+).

It is found in the cytoplasm. The catalysed reaction is 4-(phosphooxy)-L-threonine + NAD(+) = 3-amino-2-oxopropyl phosphate + CO2 + NADH. It participates in cofactor biosynthesis; pyridoxine 5'-phosphate biosynthesis; pyridoxine 5'-phosphate from D-erythrose 4-phosphate: step 4/5. Functionally, catalyzes the NAD(P)-dependent oxidation of 4-(phosphooxy)-L-threonine (HTP) into 2-amino-3-oxo-4-(phosphooxy)butyric acid which spontaneously decarboxylates to form 3-amino-2-oxopropyl phosphate (AHAP). The polypeptide is 4-hydroxythreonine-4-phosphate dehydrogenase (Shewanella denitrificans (strain OS217 / ATCC BAA-1090 / DSM 15013)).